A 541-amino-acid polypeptide reads, in one-letter code: Testis-specific chromodomain protein Y 2 (541 aa).

The 61-residue stretch at phenylalanine 6–threonine 66 folds into the Chromo domain. The interval arginine 72–histidine 104 is disordered. The segment covering lysine 87–threonine 97 has biased composition (polar residues).

As to expression, testis specific.

The protein localises to the nucleus. It catalyses the reaction L-lysyl-[protein] + acetyl-CoA = N(6)-acetyl-L-lysyl-[protein] + CoA + H(+). Functionally, may have histone acetyltransferase activity. The protein is Testis-specific chromodomain protein Y 2 (CDY2A) of Homo sapiens (Human).